The primary structure comprises 305 residues: N-acetylneuraminate lyase A (305 aa).

Positions 51 and 52 each coordinate aceneuramate. The Proton donor role is filled by Tyr-143. The active-site Schiff-base intermediate with substrate is the Lys-173. Aceneuramate is bound by residues Ser-175, Gly-197, Asp-199, Glu-200, and Ser-216.

Belongs to the DapA family. NanA subfamily. As to quaternary structure, homotetramer.

It localises to the cytoplasm. The enzyme catalyses aceneuramate = aldehydo-N-acetyl-D-mannosamine + pyruvate. It participates in amino-sugar metabolism; N-acetylneuraminate degradation. Functionally, catalyzes the cleavage of N-acetylneuraminic acid (sialic acid) to form pyruvate and N-acetylmannosamine via a Schiff base intermediate. It prevents sialic acids from being recycled and returning to the cell surface. Involved in the N-glycolylneuraminic acid (Neu5Gc) degradation pathway. This Xenopus laevis (African clawed frog) protein is N-acetylneuraminate lyase A (npl-a).